The following is a 464-amino-acid chain: Mothers against decapentaplegic homolog 5 (464 aa).

An MH1 domain is found at 13 to 137 (PAVKRLLGWK…YKRVESPVLP (125 aa)). Residues Cys65, Cys110, Cys122, and His127 each coordinate Zn(2+). The segment at 166-258 (HMPLNATFPE…LAPQNMPRGD (93 aa)) is disordered. A compositionally biased stretch (polar residues) spans 173-183 (FPESFQQHSGG). A compositionally biased stretch (low complexity) spans 199 to 216 (ASSGTYPNSPASSGPSSP). Residues 237-251 (QDGSQSMETGSSLAP) are compositionally biased toward polar residues. The 195-residue stretch at 270–464 (WCSIVYYELN…SPLNPISSVS (195 aa)) folds into the MH2 domain.

The protein belongs to the dwarfin/SMAD family. As to quaternary structure, may form trimers with the co-SMAD SMAD4.

The protein localises to the cytoplasm. Its subcellular location is the nucleus. Involved in ventralization. May mediate Bmp2b signaling during early phases of embryonic dorsal-ventral pattern formation. Required for initiation of Smad1 expression during gastrulation. The chain is Mothers against decapentaplegic homolog 5 (smad5) from Danio rerio (Zebrafish).